Here is a 112-residue protein sequence, read N- to C-terminus: MGALRGRWAEEEALRFLLGKGYRLLWRNRRTPFGEVDLFMEKDGVYVVVEVKQRASARFGAPLEAITPGKVRRLLQSARFLLGRDDLPVRLEAVLVHGTPKDFRLEHLVLEL.

The protein belongs to the UPF0102 family.

The polypeptide is UPF0102 protein TTHA0372 (Thermus thermophilus (strain ATCC 27634 / DSM 579 / HB8)).